Reading from the N-terminus, the 82-residue chain is Putative membrane protein insertion efficiency factor (82 aa).

It belongs to the UPF0161 family.

It is found in the cell inner membrane. In terms of biological role, could be involved in insertion of integral membrane proteins into the membrane. This is Putative membrane protein insertion efficiency factor from Francisella tularensis subsp. novicida (strain U112).